We begin with the raw amino-acid sequence, 211 residues long: Transcription antitermination protein NusB (211 aa).

The protein belongs to the NusB family.

Its function is as follows. Involved in transcription antitermination. Required for transcription of ribosomal RNA (rRNA) genes. Binds specifically to the boxA antiterminator sequence of the ribosomal RNA (rrn) operons. The sequence is that of Transcription antitermination protein NusB from Gloeobacter violaceus (strain ATCC 29082 / PCC 7421).